A 636-amino-acid polypeptide reads, in one-letter code: Probable potassium transport system protein Kup (636 aa).

Helical transmembrane passes span 23 to 43 (LVIG…LYSL), 63 to 83 (IISL…VVFV), 114 to 134 (VLMM…VITP), 150 to 170 (PQLS…LFLI), 182 to 202 (FGPV…YNLV), 217 to 237 (ISFL…VFLV), 260 to 280 (WFVL…AMLL), 298 to 318 (LLIP…QAVI), 350 to 370 (IYLP…VISF), 379 to 399 (AYGI…AVVM), 407 to 427 (PALV…FFAA), and 432 to 452 (VAEG…LLMT).

It belongs to the HAK/KUP transporter (TC 2.A.72) family.

The protein localises to the cell inner membrane. It carries out the reaction K(+)(in) + H(+)(in) = K(+)(out) + H(+)(out). In terms of biological role, transport of potassium into the cell. Likely operates as a K(+):H(+) symporter. The protein is Probable potassium transport system protein Kup of Cupriavidus pinatubonensis (strain JMP 134 / LMG 1197) (Cupriavidus necator (strain JMP 134)).